We begin with the raw amino-acid sequence, 1145 residues long: Cellulose synthase-like protein D3 (1145 aa).

The segment covering Met1–Asp19 has biased composition (polar residues). 2 disordered regions span residues Met1 to Arg38 and Asp189 to Asp208. 2 helical membrane-spanning segments follow: residues Val289–Met309 and Ala319–Leu339. The active site involves Asp419. Ser755 is subject to Phosphoserine. The active site involves Asp848. Transmembrane regions (helical) follow at residues Phe930–Val950, Thr956–Ile976, Leu1002–Leu1022, Ser1045–Phe1065, Leu1079–Gly1099, and Thr1109–Ile1129.

The protein belongs to the glycosyltransferase 2 family. Plant cellulose synthase-like D subfamily. In terms of tissue distribution, preferentially expressed in root hair cells. Expressed in roots, leaves, stems, flowers and siliques.

Its subcellular location is the golgi apparatus membrane. Its function is as follows. Thought to be a Golgi-localized beta-glycan synthase that polymerize the backbones of noncellulosic polysaccharides (hemicelluloses) of plant cell wall. Required for synthesis of a cell wall polysaccharide essential for root hair elongation, but not initiation. May be the functional ortholog of rice CSLD1. The sequence is that of Cellulose synthase-like protein D3 (CSLD3) from Arabidopsis thaliana (Mouse-ear cress).